A 336-amino-acid polypeptide reads, in one-letter code: Acetyl-coenzyme A carboxylase carboxyl transferase subunit beta (336 aa).

Residues 27–297 form the CoA carboxyltransferase N-terminal domain; it reads LWTKCESCQG…VAPAPAPAAT (271 aa). The Zn(2+) site is built by Cys31, Cys34, Cys50, and Cys53. The C4-type zinc finger occupies 31 to 53; it reads CESCQGILYRPDLERNLEVCPKC. The tract at residues 287–336 is disordered; the sequence is SVAPAPAPAATVDPEPESAEPEAPAEEAGPAGAAGDQAGESQDEGDPRNA. Positions 300-311 are enriched in acidic residues; that stretch reads PEPESAEPEAPA. Over residues 312 to 326 the composition is skewed to low complexity; that stretch reads EEAGPAGAAGDQAGE.

Belongs to the AccD/PCCB family. As to quaternary structure, acetyl-CoA carboxylase is a heterohexamer composed of biotin carboxyl carrier protein (AccB), biotin carboxylase (AccC) and two subunits each of ACCase subunit alpha (AccA) and ACCase subunit beta (AccD). Requires Zn(2+) as cofactor.

It is found in the cytoplasm. It carries out the reaction N(6)-carboxybiotinyl-L-lysyl-[protein] + acetyl-CoA = N(6)-biotinyl-L-lysyl-[protein] + malonyl-CoA. Its pathway is lipid metabolism; malonyl-CoA biosynthesis; malonyl-CoA from acetyl-CoA: step 1/1. In terms of biological role, component of the acetyl coenzyme A carboxylase (ACC) complex. Biotin carboxylase (BC) catalyzes the carboxylation of biotin on its carrier protein (BCCP) and then the CO(2) group is transferred by the transcarboxylase to acetyl-CoA to form malonyl-CoA. This is Acetyl-coenzyme A carboxylase carboxyl transferase subunit beta from Halorhodospira halophila (strain DSM 244 / SL1) (Ectothiorhodospira halophila (strain DSM 244 / SL1)).